The sequence spans 382 residues: Caspase-1-B (382 aa).

A propeptide spanning residues 1-98 (MTAQLNKVRK…HEHAPSPIQE (98 aa)) is cleaved from the precursor. Residues His-216 and Cys-270 contribute to the active site. Positions 283-292 (DVAPAPLEDD) are excised as a propeptide.

Belongs to the peptidase C14A family. As to quaternary structure, heterotetramer that consists of two anti-parallel arranged heterodimers, each one formed by a 20 kDa (Caspase-1 subunit p20) and a 10 kDa (Caspase-1 subunit p10) subunit. Heterotetramer that consists of two anti-parallel arranged heterodimers, each one formed by a 20 kDa (Caspase-1 subunit p20) and a 10 kDa (Caspase-1 subunit p10) subunit. Can form a heterodimer with isoform epsilon which then has an inhibitory effect. Post-translationally, the two subunits are derived from the precursor sequence by an autocatalytic mechanism.

It localises to the cytoplasm. The protein resides in the cell membrane. It catalyses the reaction Strict requirement for an Asp residue at position P1 and has a preferred cleavage sequence of Tyr-Val-Ala-Asp-|-.. Its function is as follows. Thiol protease involved in a variety of inflammatory processes by proteolytically cleaving other proteins, such as the precursors of the inflammatory cytokines interleukin-1 beta (IL1B) and interleukin 18 (IL18) as well as the pyroptosis inducer Gasdermin-D (GSDMD), into active mature peptides. Plays a key role in cell immunity as an inflammatory response initiator: once activated through formation of an inflammasome complex, it initiates a pro-inflammatory response through the cleavage of the two inflammatory cytokines IL1B and IL18, releasing the mature cytokines which are involved in a variety of inflammatory processes. Cleaves a tetrapeptide after an Asp residue at position P1. Also initiates pyroptosis, a programmed lytic cell death pathway, through cleavage of GSDMD. This is Caspase-1-B (casp1-b) from Xenopus laevis (African clawed frog).